The chain runs to 234 residues: Enolase-phosphatase E1 (234 aa).

Mg(2+) is bound by residues D10 and E12. Substrate is bound by residues 125–126 (SS) and K162. Residue D188 participates in Mg(2+) binding.

The protein belongs to the HAD-like hydrolase superfamily. MasA/MtnC family. In terms of assembly, monomer. The cofactor is Mg(2+).

It localises to the cytoplasm. It is found in the nucleus. It carries out the reaction 5-methylsulfanyl-2,3-dioxopentyl phosphate + H2O = 1,2-dihydroxy-5-(methylsulfanyl)pent-1-en-3-one + phosphate. The protein operates within amino-acid biosynthesis; L-methionine biosynthesis via salvage pathway; L-methionine from S-methyl-5-thio-alpha-D-ribose 1-phosphate: step 3/6. It participates in amino-acid biosynthesis; L-methionine biosynthesis via salvage pathway; L-methionine from S-methyl-5-thio-alpha-D-ribose 1-phosphate: step 4/6. In terms of biological role, bifunctional enzyme that catalyzes the enolization of 2,3-diketo-5-methylthiopentyl-1-phosphate (DK-MTP-1-P) into the intermediate 2-hydroxy-3-keto-5-methylthiopentenyl-1-phosphate (HK-MTPenyl-1-P), which is then dephosphorylated to form the acireductone 1,2-dihydroxy-3-keto-5-methylthiopentene (DHK-MTPene). This chain is Enolase-phosphatase E1, found in Sordaria macrospora (strain ATCC MYA-333 / DSM 997 / K(L3346) / K-hell).